The primary structure comprises 223 residues: Fibroblast growth factor-binding protein 2 (223 aa).

Positions 1–19 (MKFVPCLLLVTLSCLGTLG) are cleaved as a signal peptide. The segment at 23 to 45 (RQKQGSTGEEFHFQTGGRDSCTM) is disordered. Cystine bridges form between Cys43–Cys63, Cys72–Cys106, and Cys81–Cys117. The interval 120–201 (AGPQAHMQQV…PGGNEEAKKK (82 aa)) is disordered. Polar residues predominate over residues 125-144 (HMQQVTSSLKGSPEPNQQPE). Residues 175–186 (AKPTTRPTAKPT) are compositionally biased toward low complexity. Residues Cys206 and Cys214 are joined by a disulfide bond.

The protein belongs to the fibroblast growth factor-binding protein family. Expressed in serum, peripheral leukocytes and cytotoxic T-lymphocytes, but not in granulocytes and monocytes (at protein level).

It localises to the secreted. The protein resides in the extracellular space. The polypeptide is Fibroblast growth factor-binding protein 2 (FGFBP2) (Homo sapiens (Human)).